We begin with the raw amino-acid sequence, 804 residues long: Type 2 DNA topoisomerase 6 subunit B (804 aa).

Residues asparagine 58, aspartate 89, 110 to 111, 120 to 127, and lysine 629 contribute to the ATP site; these read SR and GQQGIGIS.

It belongs to the TOP6B family. In terms of assembly, homodimer. Heterotetramer of two Top6A and two Top6B chains.

It carries out the reaction ATP-dependent breakage, passage and rejoining of double-stranded DNA.. Functionally, relaxes both positive and negative superturns and exhibits a strong decatenase activity. The chain is Type 2 DNA topoisomerase 6 subunit B from Halobacterium salinarum (strain ATCC 29341 / DSM 671 / R1).